The sequence spans 765 residues: MQTPEAGADSTVSTVPLQTSVPVQPAVSGQQVASQVPVQQQAQTVQQVQHVYQAQVQYVQEENNSVYTNGTIRAYSYSEPQLYNQNSSGNYFDTQGGGGSAAQVSTVVSTHSMANNGNGTGALAMGLTGGQIISSSGAYLIGGNSMDGSAPHGAAQTTRASPATIEMAIETLQKSEGLSSQRSSLLNSHLQWLLDNYETAEGVSLPRSTLYNHYLRHCQEQKLDPVNAASFGKLIRSIFMGLRTRRLGTRGNSKYHYYGIRVKPDSPLNRLQEDMQYMALRQQPVQQKQRFKPVQKMDGVSGDNFSSAGQHTPSAAEQTFIAQSQHHQQFLDGSRALPEFVELDLGEAVDGVGPEDVKALQTLYREHCEAILDVVVNLQFNLIENLWQTFWRYSASSSVEGVTITENSGLSEIEGRLPRARLILLCRHEAVHKWMNTCDHLMYQALVEILIPDVLRPIPSALTQAIRNFAKSLEGWLTNAMSSIPPRMINTKVSAVSAFAQTLRRYTSLNHLAQAARAVLQNTSQINQMLSDLNRVDFANVQEQASWVCQCEEGVVQRLEQDFKATLQQQSSLEQWAAWLDNVVTQILKPYEDKPTLPKAARQFLLKWSFYSSMVIRDLTLRSAASFGSFHLIRLLYDEYMFYLVEHRVAQATGETAIGVMGEFQDLNTMSPANIDKDEVSEMDSDLDEEMEEADEPLAKREKVEADVIQVLQVGAMEDGSSAVVGIVQPSMINSLPPTTNNHSEHILSTGTSTIRHVGNTYASV.

Positions histidine 189–proline 264 form a DNA-binding region, RFX-type winged-helix.

It belongs to the RFX family.

The protein localises to the nucleus. Functionally, transcription factor required for ciliogenesis and islet cell differentiation during endocrine pancreas development. The protein is Transcription factor RFX3 (rfx3) of Danio rerio (Zebrafish).